Consider the following 217-residue polypeptide: Small ribosomal subunit protein uS2 (217 aa).

This sequence belongs to the universal ribosomal protein uS2 family.

This chain is Small ribosomal subunit protein uS2, found in Korarchaeum cryptofilum (strain OPF8).